The following is a 126-amino-acid chain: Small ribosomal subunit protein uS8 (126 aa).

The protein belongs to the universal ribosomal protein uS8 family. As to quaternary structure, part of the 30S ribosomal subunit. Contacts proteins S5 and S12.

One of the primary rRNA binding proteins, it binds directly to 16S rRNA central domain where it helps coordinate assembly of the platform of the 30S subunit. The sequence is that of Small ribosomal subunit protein uS8 from Nitratidesulfovibrio vulgaris (strain DSM 19637 / Miyazaki F) (Desulfovibrio vulgaris).